Here is an 85-residue protein sequence, read N- to C-terminus: Large ribosomal subunit protein bL27 (85 aa).

Over residues 1–10 (MAQKKGGGST) the composition is skewed to gly residues. A disordered region spans residues 1–21 (MAQKKGGGSTRNGRDSQPKML).

The protein belongs to the bacterial ribosomal protein bL27 family.

This Polaromonas naphthalenivorans (strain CJ2) protein is Large ribosomal subunit protein bL27.